A 41-amino-acid chain; its full sequence is Cytochrome b559 subunit beta (41 aa).

A helical membrane pass occupies residues 16 to 32 (WLAVHALAIPTVFFLGS). Histidine 20 is a binding site for heme.

It belongs to the PsbE/PsbF family. In terms of assembly, heterodimer of an alpha subunit and a beta subunit. PSII is composed of 1 copy each of membrane proteins PsbA, PsbB, PsbC, PsbD, PsbE, PsbF, PsbH, PsbI, PsbJ, PsbK, PsbL, PsbM, PsbT, PsbY, PsbZ, Psb30/Ycf12, at least 3 peripheral proteins of the oxygen-evolving complex and a large number of cofactors. It forms dimeric complexes. The cofactor is heme b.

The protein localises to the plastid. It localises to the chloroplast thylakoid membrane. In terms of biological role, this b-type cytochrome is tightly associated with the reaction center of photosystem II (PSII). PSII is a light-driven water:plastoquinone oxidoreductase that uses light energy to abstract electrons from H(2)O, generating O(2) and a proton gradient subsequently used for ATP formation. It consists of a core antenna complex that captures photons, and an electron transfer chain that converts photonic excitation into a charge separation. This chain is Cytochrome b559 subunit beta, found in Euglena gracilis.